Here is a 122-residue protein sequence, read N- to C-terminus: Large ribosomal subunit protein uL14 (122 aa).

It belongs to the universal ribosomal protein uL14 family. In terms of assembly, part of the 50S ribosomal subunit. Forms a cluster with proteins L3 and L19. In the 70S ribosome, L14 and L19 interact and together make contacts with the 16S rRNA in bridges B5 and B8.

Its function is as follows. Binds to 23S rRNA. Forms part of two intersubunit bridges in the 70S ribosome. The chain is Large ribosomal subunit protein uL14 from Macrococcus caseolyticus (strain JCSC5402) (Macrococcoides caseolyticum).